A 142-amino-acid chain; its full sequence is Baculoviral IAP repeat-containing protein 5 (142 aa).

The BIR repeat unit spans residues Arg-18 to Ser-88. Phosphoserine; by AURKC is present on Ser-20. Lys-23 carries the post-translational modification N6-acetyllysine. Thr-34 carries the post-translational modification Phosphothreonine; by CDK1 and CDK15. Phosphothreonine is present on Thr-48. Zn(2+) is bound by residues Cys-57, Cys-60, His-77, and Cys-84. An N6-acetyllysine mark is found at Lys-90, Lys-110, Lys-112, and Lys-115. Thr-117 is subject to Phosphothreonine; by AURKB. N6-acetyllysine is present on Lys-129.

Belongs to the IAP family. In terms of assembly, monomer or homodimer. Exists as a homodimer in the apo state and as a monomer in the CPC-bound state. The monomer protects cells against apoptosis more efficiently than the dimer. Only the dimeric form is capable of enhancing tubulin stability in cells. When phosphorylated, interacts with LAMTOR5/HBXIP; the resulting complex binds pro-CASP9, as well as active CASP9, but much less efficiently. Component of the chromosomal passenger complex (CPC) composed of at least BIRC5/survivin, CDCA8/borealin, INCENP, AURKB or AURKC; in the complex forms a triple-helix bundle-based subcomplex with INCENP and CDCA8. Interacts with JTB. Interacts (via BIR domain) with histone H3 phosphorylated at 'Thr-3' (H3pT3). Interacts with EVI5. Interacts with GTP-bound RAN in both the S and M phases of the cell cycle. Interacts with USP9X. Interacts with tubulin. Interacts with BIRC2/c-IAP1. The acetylated form at Lys-129 interacts with STAT3. The monomeric form deacetylated at Lys-129 interacts with XPO1/CRM1. The monomeric form interacts with XIAP/BIRC4. Both the dimeric and monomeric form can interact with DIABLO/SMAC. Interacts with BIRC6/bruce. Interacts with FBXL7; this interaction facilitates the polyubiquitination and subsequent proteasomal degradation of BIRC5 by the SCF(FBXL7) E3 ubiquitin-protein ligase complex. Post-translationally, ubiquitinated by the Cul9-RING ubiquitin-protein ligase complex, leading to its degradation. Ubiquitination is required for centrosomal targeting. Deubiquitinated by USP35 or USP38; leading to stabilization. Acetylation at Lys-129 results in its homodimerization, while deacetylation promotes the formation of monomers which heterodimerize with XPO1/CRM1 which facilitates its nuclear export. The acetylated form represses STAT3 transactivation. The dynamic equilibrium between its acetylation and deacetylation at Lys-129 determines its interaction with XPO1/CRM1, its subsequent subcellular localization, and its ability to inhibit STAT3 transactivation. In terms of processing, in vitro phosphorylation at Thr-117 by AURKB prevents interaction with INCENP and localization to mitotic chromosomes. Phosphorylation at Thr-48 by CK2 is critical for its mitotic and anti-apoptotic activities. Phosphorylation at Thr-34 by CDK15 is critical for its anti-apoptotic activity. Phosphorylation at Ser-20 by AURKC is critical for regulation of proper chromosome alignment and segregation, and possibly cytokinesis.

The protein localises to the cytoplasm. The protein resides in the nucleus. It is found in the chromosome. Its subcellular location is the centromere. It localises to the cytoskeleton. The protein localises to the spindle. The protein resides in the kinetochore. It is found in the midbody. Functionally, multitasking protein that has dual roles in promoting cell proliferation and preventing apoptosis. Component of a chromosome passage protein complex (CPC) which is essential for chromosome alignment and segregation during mitosis and cytokinesis. Acts as an important regulator of the localization of this complex; directs CPC movement to different locations from the inner centromere during prometaphase to midbody during cytokinesis and participates in the organization of the center spindle by associating with polymerized microtubules. Involved in the recruitment of CPC to centromeres during early mitosis via association with histone H3 phosphorylated at 'Thr-3' (H3pT3) during mitosis. The complex with RAN plays a role in mitotic spindle formation by serving as a physical scaffold to help deliver the RAN effector molecule TPX2 to microtubules. May counteract a default induction of apoptosis in G2/M phase. The acetylated form represses STAT3 transactivation of target gene promoters. May play a role in neoplasia. Inhibitor of CASP3 and CASP7. Essential for the maintenance of mitochondrial integrity and function. This Pongo abelii (Sumatran orangutan) protein is Baculoviral IAP repeat-containing protein 5 (BIRC5).